Reading from the N-terminus, the 306-residue chain is Methionyl-tRNA formyltransferase (306 aa).

110–113 lines the (6S)-5,6,7,8-tetrahydrofolate pocket; it reads SLLP.

This sequence belongs to the Fmt family.

The enzyme catalyses L-methionyl-tRNA(fMet) + (6R)-10-formyltetrahydrofolate = N-formyl-L-methionyl-tRNA(fMet) + (6S)-5,6,7,8-tetrahydrofolate + H(+). In terms of biological role, attaches a formyl group to the free amino group of methionyl-tRNA(fMet). The formyl group appears to play a dual role in the initiator identity of N-formylmethionyl-tRNA by promoting its recognition by IF2 and preventing the misappropriation of this tRNA by the elongation apparatus. This Brucella melitensis biotype 2 (strain ATCC 23457) protein is Methionyl-tRNA formyltransferase.